Consider the following 430-residue polypeptide: Methylthioribose kinase 1 (430 aa).

ATP is bound by residues 52–56, Lys-71, and 125–127; these read DGNLN and RYI. Asn-56 is a substrate binding site. Asp-246 contributes to the substrate binding site. 263–265 contacts ATP; that stretch reads DPE. Residue Arg-373 participates in substrate binding.

The protein belongs to the methylthioribose kinase family. In terms of assembly, homodimer.

The enzyme catalyses 5-(methylsulfanyl)-D-ribose + ATP = 5-(methylsulfanyl)-alpha-D-ribose 1-phosphate + ADP + H(+). Its pathway is amino-acid biosynthesis; L-methionine biosynthesis via salvage pathway; S-methyl-5-thio-alpha-D-ribose 1-phosphate from S-methyl-5'-thioadenosine (hydrolase route): step 2/2. Functionally, catalyzes the phosphorylation of methylthioribose into methylthioribose-1-phosphate. In Oryza sativa subsp. japonica (Rice), this protein is Methylthioribose kinase 1.